Reading from the N-terminus, the 90-residue chain is Small ribosomal subunit protein bS16 (90 aa).

This sequence belongs to the bacterial ribosomal protein bS16 family.

The protein is Small ribosomal subunit protein bS16 of Lactococcus lactis subsp. cremoris (strain MG1363).